Reading from the N-terminus, the 344-residue chain is Mitogen-activated protein kinase mpkC (344 aa).

The region spanning 19–298 (YANVQPVGLG…AETALQHPYL (280 aa)) is the Protein kinase domain. Residues 25 to 33 (VGLGAFGLV) and Lys48 contribute to the ATP site. Asp140 serves as the catalytic Proton acceptor. Phosphothreonine is present on Thr170. The TXY motif lies at 170–172 (TGY). Tyr172 carries the phosphotyrosine modification.

The protein belongs to the protein kinase superfamily. Ser/Thr protein kinase family. MAP kinase subfamily. HOG1 sub-subfamily. The cofactor is Mg(2+). In terms of processing, dually phosphorylated on Thr-170 and Tyr-172, which activates the enzyme.

It catalyses the reaction L-seryl-[protein] + ATP = O-phospho-L-seryl-[protein] + ADP + H(+). The enzyme catalyses L-threonyl-[protein] + ATP = O-phospho-L-threonyl-[protein] + ADP + H(+). Activated by tyrosine and threonine phosphorylation. In terms of biological role, mitogen-activated protein kinase required for growth on media where sorbitol or mannitol is the sole carbon source. This is Mitogen-activated protein kinase mpkC (mpkC) from Aspergillus oryzae (strain ATCC 42149 / RIB 40) (Yellow koji mold).